The primary structure comprises 390 residues: GDSL esterase/lipase At1g28580 (390 aa).

The N-terminal stretch at 1–28 (MAYPGSPILMKLLVFIFLSTFVVTNVSS) is a signal peptide. Residue Ser-44 is the Nucleophile of the active site. 2 N-linked (GlcNAc...) asparagine glycosylation sites follow: Asn-140 and Asn-322. Catalysis depends on residues Asp-347 and His-350.

The protein belongs to the 'GDSL' lipolytic enzyme family.

The protein localises to the secreted. This is GDSL esterase/lipase At1g28580 from Arabidopsis thaliana (Mouse-ear cress).